A 176-amino-acid polypeptide reads, in one-letter code: 3-hydroxyacyl-[acyl-carrier-protein] dehydratase FabZ (176 aa).

H54 is a catalytic residue.

The protein belongs to the thioester dehydratase family. FabZ subfamily.

The protein resides in the cytoplasm. It carries out the reaction a (3R)-hydroxyacyl-[ACP] = a (2E)-enoyl-[ACP] + H2O. Its function is as follows. Involved in unsaturated fatty acids biosynthesis. Catalyzes the dehydration of short chain beta-hydroxyacyl-ACPs and long chain saturated and unsaturated beta-hydroxyacyl-ACPs. The protein is 3-hydroxyacyl-[acyl-carrier-protein] dehydratase FabZ of Yersinia pseudotuberculosis serotype O:1b (strain IP 31758).